Reading from the N-terminus, the 225-residue chain is Ribosomal RNA large subunit methyltransferase E (225 aa).

Residues Gly64, Trp66, Asp93, Asp109, and Asp138 each coordinate S-adenosyl-L-methionine. Lys178 serves as the catalytic Proton acceptor.

It belongs to the class I-like SAM-binding methyltransferase superfamily. RNA methyltransferase RlmE family.

The protein resides in the cytoplasm. The catalysed reaction is uridine(2552) in 23S rRNA + S-adenosyl-L-methionine = 2'-O-methyluridine(2552) in 23S rRNA + S-adenosyl-L-homocysteine + H(+). Functionally, specifically methylates the uridine in position 2552 of 23S rRNA at the 2'-O position of the ribose in the fully assembled 50S ribosomal subunit. The sequence is that of Ribosomal RNA large subunit methyltransferase E from Cupriavidus pinatubonensis (strain JMP 134 / LMG 1197) (Cupriavidus necator (strain JMP 134)).